Here is a 131-residue protein sequence, read N- to C-terminus: D-ribose pyranase (131 aa).

H20 (proton donor) is an active-site residue. Substrate is bound by residues D28, H98, and 120 to 122; that span reads YSN.

This sequence belongs to the RbsD / FucU family. RbsD subfamily. Homodecamer.

It is found in the cytoplasm. It carries out the reaction beta-D-ribopyranose = beta-D-ribofuranose. Its pathway is carbohydrate metabolism; D-ribose degradation; D-ribose 5-phosphate from beta-D-ribopyranose: step 1/2. Functionally, catalyzes the interconversion of beta-pyran and beta-furan forms of D-ribose. In Latilactobacillus sakei subsp. sakei (strain 23K) (Lactobacillus sakei subsp. sakei), this protein is D-ribose pyranase.